The primary structure comprises 264 residues: NAD-capped RNA hydrolase NudC (264 aa).

R70 serves as a coordination point for substrate. Zn(2+)-binding residues include C99 and C102. E112 serves as a coordination point for substrate. Zn(2+) contacts are provided by C117 and C122. Y127 contributes to the substrate binding site. The region spanning 128–257 (PVICPSIIVA…TIALKLINAT (130 aa)) is the Nudix hydrolase domain. Residues A166, E182, and E186 each coordinate a divalent metal cation. The Nudix box signature appears at 167-188 (GFVEIGESFEQTVEREVFEETG). 200–207 (QPWAFPNS) provides a ligand contact to substrate. Position 227 (E227) interacts with a divalent metal cation. A250 provides a ligand contact to substrate.

Belongs to the Nudix hydrolase family. NudC subfamily. As to quaternary structure, homodimer. The cofactor is Mg(2+). Mn(2+) serves as cofactor. Requires Zn(2+) as cofactor.

The enzyme catalyses a 5'-end NAD(+)-phospho-ribonucleoside in mRNA + H2O = a 5'-end phospho-adenosine-phospho-ribonucleoside in mRNA + beta-nicotinamide D-ribonucleotide + 2 H(+). It carries out the reaction NAD(+) + H2O = beta-nicotinamide D-ribonucleotide + AMP + 2 H(+). It catalyses the reaction NADH + H2O = reduced beta-nicotinamide D-ribonucleotide + AMP + 2 H(+). In terms of biological role, mRNA decapping enzyme that specifically removes the nicotinamide adenine dinucleotide (NAD) cap from a subset of mRNAs by hydrolyzing the diphosphate linkage to produce nicotinamide mononucleotide (NMN) and 5' monophosphate mRNA. The NAD-cap is present at the 5'-end of some mRNAs and stabilizes RNA against 5'-processing. Has preference for mRNAs with a 5'-end purine. Catalyzes the hydrolysis of a broad range of dinucleotide pyrophosphates. This Actinobacillus succinogenes (strain ATCC 55618 / DSM 22257 / CCUG 43843 / 130Z) protein is NAD-capped RNA hydrolase NudC.